Reading from the N-terminus, the 192-residue chain is Protein FAM169BP (192 aa).

The interval 121–192 is disordered; that stretch reads YQAHPGNSED…PPGKLTRSSP (72 aa). Positions 159–177 are enriched in acidic residues; the sequence is EELEDTKDDPECGVEEEDA.

Belongs to the FAM169 family.

The protein is Protein FAM169BP of Homo sapiens (Human).